A 288-amino-acid chain; its full sequence is Diaminopimelate epimerase (288 aa).

The substrate site is built by asparagine 13, glutamine 46, and asparagine 66. The active-site Proton donor is the cysteine 75. Residues 76 to 77 (GN), asparagine 166, asparagine 199, and 217 to 218 (ER) contribute to the substrate site. The active-site Proton acceptor is the cysteine 226. Substrate is bound at residue 227–228 (GT).

It belongs to the diaminopimelate epimerase family. Homodimer.

It localises to the cytoplasm. It carries out the reaction (2S,6S)-2,6-diaminopimelate = meso-2,6-diaminopimelate. It participates in amino-acid biosynthesis; L-lysine biosynthesis via DAP pathway; DL-2,6-diaminopimelate from LL-2,6-diaminopimelate: step 1/1. In terms of biological role, catalyzes the stereoinversion of LL-2,6-diaminopimelate (L,L-DAP) to meso-diaminopimelate (meso-DAP), a precursor of L-lysine and an essential component of the bacterial peptidoglycan. The sequence is that of Diaminopimelate epimerase from Cupriavidus taiwanensis (strain DSM 17343 / BCRC 17206 / CCUG 44338 / CIP 107171 / LMG 19424 / R1) (Ralstonia taiwanensis (strain LMG 19424)).